Consider the following 499-residue polypeptide: Glycerol kinase (499 aa).

Thr12 provides a ligand contact to ADP. 3 residues coordinate ATP: Thr12, Thr13, and Ser14. Thr12 is a binding site for sn-glycerol 3-phosphate. Residue Arg16 coordinates ADP. Sn-glycerol 3-phosphate is bound by residues Arg82, Glu83, Tyr134, and Asp243. Arg82, Glu83, Tyr134, Asp243, and Gln244 together coordinate glycerol. ADP contacts are provided by Thr265 and Gly308. Positions 265, 308, 312, and 409 each coordinate ATP. Positions 409 and 413 each coordinate ADP.

This sequence belongs to the FGGY kinase family. Homotetramer and homodimer (in equilibrium).

The enzyme catalyses glycerol + ATP = sn-glycerol 3-phosphate + ADP + H(+). Its pathway is polyol metabolism; glycerol degradation via glycerol kinase pathway; sn-glycerol 3-phosphate from glycerol: step 1/1. With respect to regulation, activated by phosphorylation and inhibited by fructose 1,6-bisphosphate (FBP). Functionally, key enzyme in the regulation of glycerol uptake and metabolism. Catalyzes the phosphorylation of glycerol to yield sn-glycerol 3-phosphate. In Lachnoclostridium phytofermentans (strain ATCC 700394 / DSM 18823 / ISDg) (Clostridium phytofermentans), this protein is Glycerol kinase.